The primary structure comprises 361 residues: Peptide chain release factor 1 (361 aa).

N5-methylglutamine is present on glutamine 235. The interval 287 to 309 (QKEASAMRSAQVGSGDRSERIRT) is disordered.

The protein belongs to the prokaryotic/mitochondrial release factor family. In terms of processing, methylated by PrmC. Methylation increases the termination efficiency of RF1.

It is found in the cytoplasm. Functionally, peptide chain release factor 1 directs the termination of translation in response to the peptide chain termination codons UAG and UAA. In Chlamydia caviae (strain ATCC VR-813 / DSM 19441 / 03DC25 / GPIC) (Chlamydophila caviae), this protein is Peptide chain release factor 1.